The sequence spans 876 residues: Alanine--tRNA ligase (876 aa).

Zn(2+) contacts are provided by His565, His569, Cys667, and His671.

It belongs to the class-II aminoacyl-tRNA synthetase family. Zn(2+) serves as cofactor.

The protein localises to the cytoplasm. The catalysed reaction is tRNA(Ala) + L-alanine + ATP = L-alanyl-tRNA(Ala) + AMP + diphosphate. Its function is as follows. Catalyzes the attachment of alanine to tRNA(Ala) in a two-step reaction: alanine is first activated by ATP to form Ala-AMP and then transferred to the acceptor end of tRNA(Ala). Also edits incorrectly charged Ser-tRNA(Ala) and Gly-tRNA(Ala) via its editing domain. This is Alanine--tRNA ligase from Staphylococcus aureus (strain bovine RF122 / ET3-1).